A 458-amino-acid polypeptide reads, in one-letter code: Tetracycline resistance protein (458 aa).

12 helical membrane passes run 12-33, 81-100, 111-129, 140-162, 165-185, 201-221, 223-240, 256-276, 297-317, 324-344, 346-365, and 432-451; these read HNQVLIWLCVLSFFSVLNEMVL, LLLFGIMVNGLGSIIGFVGH, FIQGIGAAAFPALVMVVVA, AFGLIGSLVAMGEGVGPAIGGMV, YIHWSYLLLIPTATIITVPFL, MAGIILMSAGIVFFMLFTTSY, FSFLIISILAFFIFVQHI, VFFVIGTLCGGLIFGTVAGFV, GIIFPGTMSVIIFGYIGGLLV, YVLTIGSALLSSGFLIAAFFI, AAPWIMTIIVIFVFGGLSFT, and MLILFAGIIVICWLVILNVY.

The protein belongs to the major facilitator superfamily. TCR/Tet family.

It is found in the cell membrane. In terms of biological role, resistance to tetracycline by an active tetracycline efflux. This is an energy-dependent process that decreases the accumulation of the antibiotic in whole cells. This protein functions as a metal-tetracycline/H(+) antiporter. The protein is Tetracycline resistance protein (tetB) of Bacillus subtilis (strain 168).